Here is a 209-residue protein sequence, read N- to C-terminus: Urease accessory protein UreG (209 aa).

Residue 18–25 (GPVGSGKT) coordinates GTP.

Belongs to the SIMIBI class G3E GTPase family. UreG subfamily. As to quaternary structure, homodimer. UreD, UreF and UreG form a complex that acts as a GTP-hydrolysis-dependent molecular chaperone, activating the urease apoprotein by helping to assemble the nickel containing metallocenter of UreC. The UreE protein probably delivers the nickel.

The protein resides in the cytoplasm. In terms of biological role, facilitates the functional incorporation of the urease nickel metallocenter. This process requires GTP hydrolysis, probably effectuated by UreG. In Cupriavidus necator (strain ATCC 17699 / DSM 428 / KCTC 22496 / NCIMB 10442 / H16 / Stanier 337) (Ralstonia eutropha), this protein is Urease accessory protein UreG.